Consider the following 260-residue polypeptide: Acidic leucine-rich nuclear phosphoprotein 32 family member E (260 aa).

Residue Met1 is modified to N-acetylmethionine. LRR repeat units lie at residues 18 to 38, 43 to 64, 65 to 87, and 89 to 110; these read EVTE…EGLN, ELEF…PSLN, KLRK…AEKC, and NLTY…EALQ. Lys68 participates in a covalent cross-link: Glycyl lysine isopeptide (Lys-Gly) (interchain with G-Cter in SUMO2). In terms of domain architecture, LRRCT spans 123–161; it reads CEITNLEDYRESIFELLQQITYLDGFDQEDNEAPDSEEE. Composition is skewed to acidic residues over residues 149–208 and 218–240; these read DQED…EEEV and IQDE…EEEE. A disordered region spans residues 149-260; the sequence is DQEDNEAPDS…AEDDGEEDDD (112 aa). Residues 207-260 are ZID domain; sequence EVGLSYLMKDEIQDEEDDDDYVDEGEEEEEEEEEGLRGEKRKRDAEDDGEEDDD. Over residues 241 to 251 the composition is skewed to basic and acidic residues; sequence GLRGEKRKRDA.

The protein belongs to the ANP32 family. Component of a SWR1-like complex, composed of EP400, KAT5/TIP60, TRRAP, BRD8, RUVBL1, RUVBL2, ING3 and ANP32E; the complex does not contain SRCAP. Interacts with H2A.Z/H2AZ1. Interacts with the importin alpha KPNA1 and KPNA2. Post-translationally, phosphorylated. The phosphorylation is nuclear localization signal (NLS)-dependent. In terms of tissue distribution, expressed at highest levels in cerebellum and spleen. In the cerebellum, expressed mainly in granule cells and, to a lesser extent, in Purkinje cells.

It is found in the cytoplasm. Its subcellular location is the nucleus. Functionally, histone chaperone that specifically mediates the genome-wide removal of histone H2A.Z/H2AZ1 from the nucleosome: removes H2A.Z/H2AZ1 from its normal sites of deposition, especially from enhancer and insulator regions. Not involved in deposition of H2A.Z/H2AZ1 in the nucleosome. May stabilize the evicted H2A.Z/H2AZ1-H2B dimer, thus shifting the equilibrium towards dissociation and the off-chromatin state. Inhibits activity of protein phosphatase 2A (PP2A). Does not inhibit protein phosphatase 1. May play a role in cerebellar development and synaptogenesis. This chain is Acidic leucine-rich nuclear phosphoprotein 32 family member E (Anp32e), found in Mus musculus (Mouse).